Consider the following 108-residue polypeptide: Ig kappa chain V-V region NQ5-89.4 (108 aa).

The tract at residues 1-23 (DIQMTQTTSSLSASLGHRVTITC) is framework-1. Cys-23 and Cys-88 are joined by a disulfide. Residues 24–34 (SASQDISNYLN) are complementarity-determining-1. Positions 35 to 49 (WYQQKPDGTVKLLIY) are framework-2. The interval 50–56 (YTSRLHS) is complementarity-determining-2. The segment at 57–88 (GVPSRFSGSGSATDYSLTITNLQQEDXATYXC) is framework-3. The complementarity-determining-3 stretch occupies residues 89–97 (QQGNTLPYT). Positions 98–107 (FGGGTKLXIK) are framework-4.

Its function is as follows. Anti-2-phenyl oxazolone (PHOX) Antibody. The sequence is that of Ig kappa chain V-V region NQ5-89.4 from Mus musculus (Mouse).